Reading from the N-terminus, the 1131-residue chain is Plasma membrane ATPase (1131 aa).

6 helical membrane passes run 77-97 (PVLV…EAAA), 98-118 (IISI…LLLI), 151-171 (GAIV…LIRL), 231-251 (AVVY…LISG), 265-285 (MSAI…AVQF), and 305-325 (MLVV…SVTL). Asp357 functions as the 4-aspartylphosphate intermediate in the catalytic mechanism. The Mg(2+) site is built by Asp615 and Asp619. 5 helical membrane-spanning segments follow: residues 642 to 662 (AADI…VIGA), 689 to 709 (LITV…MAVF), 733 to 753 (ITNI…STWA), 884 to 904 (LAFF…LGGF), and 946 to 966 (VIGC…WYVL). Residues 994 to 1010 (KRSLDRRSKDDIGDKEF) are compositionally biased toward basic and acidic residues. 2 disordered regions span residues 994–1023 (KRSL…NYSN) and 1067–1131 (RRSM…TIRE). Residues 1089 to 1100 (SRTSNTLSTGSK) show a composition bias toward polar residues. The segment covering 1118–1131 (IKPDKYDFASTIRE) has biased composition (basic and acidic residues).

It belongs to the cation transport ATPase (P-type) (TC 3.A.3) family. Type IIIA subfamily.

Its subcellular location is the cell membrane. It carries out the reaction ATP + H2O + H(+)(in) = ADP + phosphate + 2 H(+)(out). Its function is as follows. The plasma membrane ATPase of plants and fungi is a hydrogen ion pump. The proton gradient it generates drives the active transport of nutrients by H(+)-symport. The resulting external acidification and/or internal alkinization may mediate growth responses. The sequence is that of Plasma membrane ATPase (PMA1) from Dunaliella bioculata (Green alga).